We begin with the raw amino-acid sequence, 1588 residues long: Ubiquitin carboxyl-terminal hydrolase 54 (1588 aa).

Arginine 12 is modified (omega-N-methylarginine). The region spanning 31 to 352 (KGLSNEPGQN…QPLLLLYADP (322 aa)) is the USP domain. The active-site Nucleophile is cysteine 42. Zn(2+) is bound by residues histidine 67, cysteine 69, cysteine 74, cysteine 77, histidine 133, cysteine 145, cysteine 150, histidine 153, cysteine 166, cysteine 169, cysteine 225, and cysteine 229. Histidine 302 acts as the Proton acceptor in catalysis. Basic and acidic residues-rich tracts occupy residues 380–391 (DSGHLTDSECNQ) and 424–434 (SEGETLKEKQA). 2 disordered regions span residues 380–447 (DSGH…TSRL) and 459–519 (HSRP…PTWR). Serine 424 bears the Phosphoserine mark. 2 stretches are compositionally biased toward polar residues: residues 436–445 (RNASKSSSTS) and 459–471 (HSRPSLASQTNAA). Positions 499 to 512 (TESTSSEARSSSSS) are enriched in low complexity. A phosphoserine mark is found at serine 574, serine 613, and serine 616. Residues 601–616 (ESGYESSERNSSSPVS) are compositionally biased toward low complexity. Residues 601 to 620 (ESGYESSERNSSSPVSLDAA) form a disordered region. Positions 678-712 (TSKSELDELQEEVARRAQEQELRKKREKELEAAKG) form a coiled coil. Disordered stretches follow at residues 801–839 (RSLQDRMQQQPPSQQPVQPSASLPSQGGGLPQPTSEQSV), 856–895 (DSELGATSPFFHSPASCPEPHSSLVSPSPAQSVSQHSPPG), 950–969 (EDNSCCSKFPPQEGRDTTQD), 1093–1172 (TRDV…SRRR), and 1525–1562 (GSVLGSRTPGPRRIDVPPDDDGRQSQYPSQYRHRSAGE). Residues 808-825 (QQQPPSQQPVQPSASLPS) show a composition bias toward low complexity. The segment covering 878 to 895 (SLVSPSPAQSVSQHSPPG) has biased composition (polar residues). Serine 1138 carries the phosphoserine modification. Residues 1536-1547 (RRIDVPPDDDGR) are compositionally biased toward basic and acidic residues.

The protein belongs to the peptidase C19 family.

It catalyses the reaction Thiol-dependent hydrolysis of ester, thioester, amide, peptide and isopeptide bonds formed by the C-terminal Gly of ubiquitin (a 76-residue protein attached to proteins as an intracellular targeting signal).. Deubiquitinase that specifically mediates 'Lys-63'-linked deubiquitination of substrates with a polyubiquitin chain composed of at least 3 ubiquitins. Specifically recognizes ubiquitin chain in position S2 and catalyzes cleavage of polyubiquitin within 'Lys-63'-linked chains. Not able to deubiquitinate substrates with shorter ubiquitin chains. Mediates deubiquitination of PLK4, maintaining PLK4 stability by reducing its ubiquitination-mediated degradation. The sequence is that of Ubiquitin carboxyl-terminal hydrolase 54 (Usp54) from Rattus norvegicus (Rat).